The chain runs to 241 residues: MSFWVEVSLNTPAQLSLPLYLPDDETFASFWPGDNASLLAALQNVLRQEHSGYIYLWAREGAGRSHLLHAACAELSQRGDAVGYVPLDKRTWFVPEVLDGMEHLSLVCIDNIECVAGDELWEMAIFDLYNRILESGKTRLLITGDRPPRQLNLGLPDLASRLDWGQIYKLQPLSDEDKLQALQLRARLRGFELPEDVGRFLLKRLDREMRTLFMTLDQLDHASITAQRKLTIPFVKEILKL.

This sequence belongs to the DnaA family. HdA subfamily. In terms of assembly, the active form seems to be an ADP-bound monomer. Forms the RIDA complex (regulatory inactivation of DnaA) of ATP-DnaA, ADP-Hda and the DNA-loaded beta sliding clamp (dnaN).

Functionally, mediates the interaction of DNA replication initiator protein DnaA with DNA polymerase subunit beta sliding clamp (dnaN). Stimulates hydrolysis of ATP-DnaA to ADP-DnaA, rendering DnaA inactive for reinitiation, a process called regulatory inhibition of DnaA or RIDA. The sequence is that of DnaA regulatory inactivator Hda from Salmonella paratyphi A (strain ATCC 9150 / SARB42).